The sequence spans 217 residues: 3,4-dihydroxy-2-butanone 4-phosphate synthase (217 aa).

Residues 37-38 (RE), D42, 150-154 (RGGHT), and E174 each bind D-ribulose 5-phosphate. A Mg(2+)-binding site is contributed by E38. H153 lines the Mg(2+) pocket.

This sequence belongs to the DHBP synthase family. In terms of assembly, homodimer. Mg(2+) is required as a cofactor. The cofactor is Mn(2+).

The catalysed reaction is D-ribulose 5-phosphate = (2S)-2-hydroxy-3-oxobutyl phosphate + formate + H(+). The protein operates within cofactor biosynthesis; riboflavin biosynthesis; 2-hydroxy-3-oxobutyl phosphate from D-ribulose 5-phosphate: step 1/1. Catalyzes the conversion of D-ribulose 5-phosphate to formate and 3,4-dihydroxy-2-butanone 4-phosphate. The protein is 3,4-dihydroxy-2-butanone 4-phosphate synthase of Sodalis glossinidius (strain morsitans).